A 179-amino-acid chain; its full sequence is Shikimate kinase (179 aa).

Position 15–20 (15–20 (GAGKTS)) interacts with ATP. Position 19 (threonine 19) interacts with Mg(2+). 3 residues coordinate substrate: aspartate 37, arginine 61, and glycine 83. Position 122 (arginine 122) interacts with ATP. Substrate is bound at residue arginine 142.

Belongs to the shikimate kinase family. In terms of assembly, monomer. Requires Mg(2+) as cofactor.

It is found in the cytoplasm. It carries out the reaction shikimate + ATP = 3-phosphoshikimate + ADP + H(+). It functions in the pathway metabolic intermediate biosynthesis; chorismate biosynthesis; chorismate from D-erythrose 4-phosphate and phosphoenolpyruvate: step 5/7. Its function is as follows. Catalyzes the specific phosphorylation of the 3-hydroxyl group of shikimic acid using ATP as a cosubstrate. This chain is Shikimate kinase, found in Coxiella burnetii (strain RSA 331 / Henzerling II).